The chain runs to 132 residues: Galectin-2 (132 aa).

In terms of domain architecture, Galectin spans 4–131 (ELEVKNMDMK…GFNMSSFKLK (128 aa)). 65 to 71 (WGQEQRE) is a binding site for a beta-D-galactoside.

As to quaternary structure, homodimer.

Its function is as follows. This protein binds beta-galactoside. Its physiological function is not yet known. In Homo sapiens (Human), this protein is Galectin-2 (LGALS2).